The primary structure comprises 199 residues: Recombination protein RecR (199 aa).

A C4-type zinc finger spans residues 57-72; sequence CSICGNITDKDPCYVC. In terms of domain architecture, Toprim spans 80-176; the sequence is TIVCVVQDSR…RVTRIAHGLP (97 aa).

The protein belongs to the RecR family.

In terms of biological role, may play a role in DNA repair. It seems to be involved in an RecBC-independent recombinational process of DNA repair. It may act with RecF and RecO. The chain is Recombination protein RecR from Exiguobacterium sibiricum (strain DSM 17290 / CCUG 55495 / CIP 109462 / JCM 13490 / 255-15).